A 286-amino-acid chain; its full sequence is Bifunctional protein FolD (286 aa).

NADP(+)-binding positions include 164-166 (GRS), serine 193, and isoleucine 234.

It belongs to the tetrahydrofolate dehydrogenase/cyclohydrolase family. Homodimer.

The enzyme catalyses (6R)-5,10-methylene-5,6,7,8-tetrahydrofolate + NADP(+) = (6R)-5,10-methenyltetrahydrofolate + NADPH. The catalysed reaction is (6R)-5,10-methenyltetrahydrofolate + H2O = (6R)-10-formyltetrahydrofolate + H(+). It functions in the pathway one-carbon metabolism; tetrahydrofolate interconversion. Its function is as follows. Catalyzes the oxidation of 5,10-methylenetetrahydrofolate to 5,10-methenyltetrahydrofolate and then the hydrolysis of 5,10-methenyltetrahydrofolate to 10-formyltetrahydrofolate. The chain is Bifunctional protein FolD from Nitratidesulfovibrio vulgaris (strain ATCC 29579 / DSM 644 / CCUG 34227 / NCIMB 8303 / VKM B-1760 / Hildenborough) (Desulfovibrio vulgaris).